Consider the following 402-residue polypeptide: Probable 2,3-bisphosphoglycerate-independent phosphoglycerate mutase (402 aa).

This sequence belongs to the BPG-independent phosphoglycerate mutase family. A-PGAM subfamily.

The enzyme catalyses (2R)-2-phosphoglycerate = (2R)-3-phosphoglycerate. The protein operates within carbohydrate degradation; glycolysis; pyruvate from D-glyceraldehyde 3-phosphate: step 3/5. In terms of biological role, catalyzes the interconversion of 2-phosphoglycerate and 3-phosphoglycerate. In Thermosipho africanus (strain TCF52B), this protein is Probable 2,3-bisphosphoglycerate-independent phosphoglycerate mutase.